The primary structure comprises 420 residues: Diphosphomevalonate decarboxylase 2 (420 aa).

A (R)-5-diphosphomevalonate-binding site is contributed by 25 to 28; the sequence is YWGK. A Peroxisomal targeting signal PTS2 motif is present at residues 42–50; sequence SVTLDPDHL. Residues Arg80, 163 to 168, and Thr219 each bind (R)-5-diphosphomevalonate; that span reads SGSACR.

This sequence belongs to the diphosphomevalonate decarboxylase family. Homodimer.

The protein localises to the peroxisome. It catalyses the reaction (R)-5-diphosphomevalonate + ATP = isopentenyl diphosphate + ADP + phosphate + CO2. Its pathway is isoprenoid biosynthesis; isopentenyl diphosphate biosynthesis via mevalonate pathway; isopentenyl diphosphate from (R)-mevalonate: step 3/3. Functionally, performs the first committed step in the biosynthesis of isoprene-containing compounds such as sterols and terpenoids. Component of the triterpenes (e.g. ginsenosides or panaxosides) and phytosterols biosynthetic pathways. Promotes the accumulation of stigmasterol and beta-sitosterol. The polypeptide is Diphosphomevalonate decarboxylase 2 (Panax ginseng (Korean ginseng)).